Reading from the N-terminus, the 498-residue chain is ATP synthase subunit beta, chloroplastic (498 aa).

T6 bears the Phosphothreonine mark. The residue at position 13 (S13) is a Phosphoserine. An ATP-binding site is contributed by 172–179; that stretch reads GGAGVGKT.

It belongs to the ATPase alpha/beta chains family. As to quaternary structure, F-type ATPases have 2 components, CF(1) - the catalytic core - and CF(0) - the membrane proton channel. CF(1) has five subunits: alpha(3), beta(3), gamma(1), delta(1), epsilon(1). CF(0) has four main subunits: a(1), b(1), b'(1) and c(9-12).

The protein localises to the plastid. It is found in the chloroplast thylakoid membrane. The enzyme catalyses ATP + H2O + 4 H(+)(in) = ADP + phosphate + 5 H(+)(out). Produces ATP from ADP in the presence of a proton gradient across the membrane. The catalytic sites are hosted primarily by the beta subunits. This is ATP synthase subunit beta, chloroplastic from Olimarabidopsis pumila (Dwarf rocket).